A 213-amino-acid chain; its full sequence is Pyrrolidone-carboxylate peptidase (213 aa).

Active-site residues include Glu-78, Cys-141, and His-165.

This sequence belongs to the peptidase C15 family. Homotetramer.

The protein resides in the cytoplasm. It catalyses the reaction Release of an N-terminal pyroglutamyl group from a polypeptide, the second amino acid generally not being Pro.. In terms of biological role, removes 5-oxoproline from various penultimate amino acid residues except L-proline. This is Pyrrolidone-carboxylate peptidase from Enterococcus faecalis (strain ATCC 700802 / V583).